Reading from the N-terminus, the 490-residue chain is Bifunctional dihydrocamalexate synthase/camalexin synthase (490 aa).

Residues 1–21 traverse the membrane as a helical segment; that stretch reads MSVFLCFLVLLPLILIFLNVL.

This sequence belongs to the cytochrome P450 family.

The protein localises to the membrane. The enzyme catalyses 2-(L-cystein-S-yl)-2-(1H-indol-3-yl)-acetonitrile + 2 reduced [NADPH--hemoprotein reductase] + 2 O2 = camalexin + hydrogen cyanide + 2 oxidized [NADPH--hemoprotein reductase] + CO2 + 4 H2O + 2 H(+). It catalyses the reaction 2-(L-cystein-S-yl)-2-(1H-indol-3-yl)-acetonitrile + reduced [NADPH--hemoprotein reductase] + O2 = (R)-dihydrocamalexate + hydrogen cyanide + oxidized [NADPH--hemoprotein reductase] + 2 H2O + 2 H(+). It carries out the reaction (R)-dihydrocamalexate + reduced [NADPH--hemoprotein reductase] + O2 = camalexin + oxidized [NADPH--hemoprotein reductase] + CO2 + 2 H2O. Its function is as follows. Multifunctional enzyme involved in the biosynthesis of the indole-derived phytoalexin camalexin. Catalyzes two reactions, the formation of dihydrocamalexate from indole-3-acetonitrile-cysteine conjugate and the oxidative decarboxylation of dihydrocamalexate which is the final step in camalexin biosynthesis. Required for the resistance to the fungal pathogens A.brassicicola, B.cinerea, B.elliptica, B.tulipae, L.maculans and Colletotrichum higginsianum. Seems not to be required for resistance to P.syringae, P.porri, and not involved in age-related resistance. The sequence is that of Bifunctional dihydrocamalexate synthase/camalexin synthase (CYP71B15) from Arabidopsis thaliana (Mouse-ear cress).